Reading from the N-terminus, the 611-residue chain is Chaperone protein DnaK (611 aa).

Position 172 is a phosphothreonine; by autocatalysis (T172). The disordered stretch occupies residues 575 to 611 (AAQAAQAQQDGGNESADKQDDNVVDADYEEVNDDDKK). Residues 596 to 611 (NVVDADYEEVNDDDKK) show a composition bias toward acidic residues.

Belongs to the heat shock protein 70 family.

Functionally, acts as a chaperone. This chain is Chaperone protein DnaK, found in Shouchella clausii (strain KSM-K16) (Alkalihalobacillus clausii).